Consider the following 309-residue polypeptide: Dihydroorotate dehydrogenase B (NAD(+)), catalytic subunit (309 aa).

FMN-binding positions include S21 and 45–46; that span reads KA. Residues K45 and 69-73 contribute to the substrate site; that span reads NAIGL. Positions 99 and 127 each coordinate FMN. Residue N127 coordinates substrate. The Nucleophile role is filled by C130. 2 residues coordinate FMN: K165 and I191. 192–193 lines the substrate pocket; it reads NT. Residues G217, 243 to 244, and 265 to 266 contribute to the FMN site; these read GG and GT.

This sequence belongs to the dihydroorotate dehydrogenase family. Type 1 subfamily. In terms of assembly, heterotetramer of 2 PyrK and 2 PyrD type B subunits. Requires FMN as cofactor.

The protein resides in the cytoplasm. It carries out the reaction (S)-dihydroorotate + NAD(+) = orotate + NADH + H(+). It participates in pyrimidine metabolism; UMP biosynthesis via de novo pathway; orotate from (S)-dihydroorotate (NAD(+) route): step 1/1. Its function is as follows. Catalyzes the conversion of dihydroorotate to orotate with NAD(+) as electron acceptor. This chain is Dihydroorotate dehydrogenase B (NAD(+)), catalytic subunit (pyrD), found in Bacillus cytotoxicus (strain DSM 22905 / CIP 110041 / 391-98 / NVH 391-98).